We begin with the raw amino-acid sequence, 375 residues long: Chaperone protein DnaJ (375 aa).

The J domain occupies 5–69 (DYYEVLGVGK…QKRAHYDQFG (65 aa)). The CR-type zinc finger occupies 132–214 (GKETTIEIPR…CGGTGKVKKR (83 aa)). Positions 145, 148, 162, 165, 188, 191, 202, and 205 each coordinate Zn(2+). CXXCXGXG motif repeat units follow at residues 145 to 152 (CETCSGSG), 162 to 169 (CSHCGGSG), 188 to 195 (CHYCNGTG), and 202 to 209 (CSTCGGTG).

Belongs to the DnaJ family. In terms of assembly, homodimer. Requires Zn(2+) as cofactor.

It localises to the cytoplasm. Participates actively in the response to hyperosmotic and heat shock by preventing the aggregation of stress-denatured proteins and by disaggregating proteins, also in an autonomous, DnaK-independent fashion. Unfolded proteins bind initially to DnaJ; upon interaction with the DnaJ-bound protein, DnaK hydrolyzes its bound ATP, resulting in the formation of a stable complex. GrpE releases ADP from DnaK; ATP binding to DnaK triggers the release of the substrate protein, thus completing the reaction cycle. Several rounds of ATP-dependent interactions between DnaJ, DnaK and GrpE are required for fully efficient folding. Also involved, together with DnaK and GrpE, in the DNA replication of plasmids through activation of initiation proteins. The chain is Chaperone protein DnaJ from Bacillus licheniformis (strain ATCC 14580 / DSM 13 / JCM 2505 / CCUG 7422 / NBRC 12200 / NCIMB 9375 / NCTC 10341 / NRRL NRS-1264 / Gibson 46).